A 253-amino-acid polypeptide reads, in one-letter code: Cholesterol ring-cleaving hydrolase IpdB subunit (253 aa).

The protein belongs to the 3-oxoacid CoA-transferase subunit B family. As to quaternary structure, heterotetramer composed of 2 IpdA subunits and 2 IpdB subunits.

It carries out the reaction (3E)-2-(2-carboxylatoethyl)-3-methyl-6-oxocyclohex-1-ene-1-carboxyl-CoA + H2O = 6-methyl-3,7-dioxodecanedioyl-CoA. The protein operates within steroid metabolism; cholesterol degradation. Involved in the final steps of cholesterol and steroid degradation. Opens the last steroid ring of cholesterol by catalyzing the hydrolysis of (3E)-2-(2-carboxylatoethyl)-3-methyl-6-oxocyclohex-1-ene-1-carboxyl-CoA (COCHEA-CoA) to 6-methyl-3,7-dioxodecanedioyl-CoA (MeDODA-CoA). The chain is Cholesterol ring-cleaving hydrolase IpdB subunit from Rhodococcus jostii (strain RHA1).